A 268-amino-acid chain; its full sequence is Hydroxyethylthiazole kinase (268 aa).

M49 lines the substrate pocket. Residues K124 and T168 each contribute to the ATP site. Substrate is bound at residue A195.

This sequence belongs to the Thz kinase family. The cofactor is Mg(2+).

The catalysed reaction is 5-(2-hydroxyethyl)-4-methylthiazole + ATP = 4-methyl-5-(2-phosphooxyethyl)-thiazole + ADP + H(+). The protein operates within cofactor biosynthesis; thiamine diphosphate biosynthesis; 4-methyl-5-(2-phosphoethyl)-thiazole from 5-(2-hydroxyethyl)-4-methylthiazole: step 1/1. Functionally, catalyzes the phosphorylation of the hydroxyl group of 4-methyl-5-beta-hydroxyethylthiazole (THZ). In Archaeoglobus fulgidus (strain ATCC 49558 / DSM 4304 / JCM 9628 / NBRC 100126 / VC-16), this protein is Hydroxyethylthiazole kinase.